A 753-amino-acid polypeptide reads, in one-letter code: Nibrin (753 aa).

An FHA domain is found at 22 to 81 (YVVGRKNCAFLIQDDQSISRSHAVLTVSRPETTHSQSVSVPVLTIKDTSKYGTFVNGSKL). 2 BRCT domains span residues 101-191 (SKFR…PTPE) and 221-311 (GKTF…LAVI). Ser-274 is modified (phosphoserine). Ser-343 carries the post-translational modification Phosphoserine; by ATM. Residues 442 to 606 (RECTPRQQSN…NTKQREENEM (165 aa)) are disordered. Residues 446 to 455 (PRQQSNSITN) show a composition bias toward polar residues. Residues 461-467 (RKRERAE) carry the Nuclear localization signal motif. Positions 490-500 (CTESSASSAWN) are enriched in polar residues. Residues 517 to 528 (ESGELASDKTDI) are compositionally biased toward basic and acidic residues. Over residues 568 to 577 (QTANGDQEAQ) the composition is skewed to polar residues. Basic and acidic residues predominate over residues 585–606 (CLETKGSRTEEGNTKQREENEM). The short motif at 739–748 (ADDLFRYDPN) is the FxF/Y motif element.

This sequence belongs to the Nibrin family. Component of the MRN complex composed of two heterodimers RAD50 and mre11 associated with a single NBN.

It is found in the nucleus. The protein resides in the chromosome. It localises to the PML body. The protein localises to the telomere. Its function is as follows. Component of the MRN complex, which plays a central role in double-strand break (DSB) repair, DNA recombination, maintenance of telomere integrity and meiosis. The MRN complex is involved in the repair of DNA double-strand breaks (DSBs) via homologous recombination (HR), an error-free mechanism which primarily occurs during S and G2 phases. The complex (1) mediates the end resection of damaged DNA, which generates proper single-stranded DNA, a key initial steps in HR, and is (2) required for the recruitment of other repair factors and efficient activation of ATM and ATR upon DNA damage. The MRN complex possesses single-strand endonuclease activity and double-strand-specific 3'-5' exonuclease activity, which are provided by MRE11, to initiate end resection, which is required for single-strand invasion and recombination. Within the MRN complex, NBN acts as a protein-protein adapter, which specifically recognizes and binds phosphorylated proteins, promoting their recruitment to DNA damage sites. Recruits MRE11 and RAD50 components of the MRN complex to DSBs in response to DNA damage. Promotes the recruitment of PI3/PI4-kinase family members ATM, ATR, and probably DNA-PKcs to the DNA damage sites, activating their functions. Mediates the recruitment of phosphorylated RBBP8/CtIP to DSBs, leading to cooperation between the MRN complex and RBBP8/CtIP to initiate end resection. The MRN complex and rbbp8/CtIP are also required for chromosome alignment during metaphase. This chain is Nibrin (NBN), found in Gallus gallus (Chicken).